A 78-amino-acid polypeptide reads, in one-letter code: Defensin-like protein 74 (78 aa).

Residues 1-28 (MNYKIGIMSLLVITSIIFLFLVPDKVEA) form the signal peptide. 4 disulfides stabilise this stretch: C32/C73, C36/C58, C42/C71, and C46/C72.

The protein belongs to the DEFL family.

It is found in the secreted. The protein is Defensin-like protein 74 (LCR43) of Arabidopsis thaliana (Mouse-ear cress).